Consider the following 288-residue polypeptide: uncharacterized protein (288 aa).

This is an uncharacterized protein from Mycobacterium tuberculosis (strain CDC 1551 / Oshkosh).